A 209-amino-acid chain; its full sequence is Glycerol-3-phosphate acyltransferase (209 aa).

5 consecutive transmembrane segments (helical) span residues 7–27 (IELA…AIIV), 85–105 (AIIL…FFGF), 117–137 (VMFG…LFVA), 142–162 (ISSL…YLLA), and 166–183 (MAWV…FWRH).

It belongs to the PlsY family. Probably interacts with PlsX.

The protein localises to the cell inner membrane. It carries out the reaction an acyl phosphate + sn-glycerol 3-phosphate = a 1-acyl-sn-glycero-3-phosphate + phosphate. Its pathway is lipid metabolism; phospholipid metabolism. Functionally, catalyzes the transfer of an acyl group from acyl-phosphate (acyl-PO(4)) to glycerol-3-phosphate (G3P) to form lysophosphatidic acid (LPA). This enzyme utilizes acyl-phosphate as fatty acyl donor, but not acyl-CoA or acyl-ACP. This Hydrogenovibrio crunogenus (strain DSM 25203 / XCL-2) (Thiomicrospira crunogena) protein is Glycerol-3-phosphate acyltransferase.